Here is a 174-residue protein sequence, read N- to C-terminus: Crossover junction endodeoxyribonuclease RuvC (174 aa).

Catalysis depends on residues Asp8, Glu67, and Asp139. Mg(2+)-binding residues include Asp8, Glu67, and Asp139.

This sequence belongs to the RuvC family. As to quaternary structure, homodimer which binds Holliday junction (HJ) DNA. The HJ becomes 2-fold symmetrical on binding to RuvC with unstacked arms; it has a different conformation from HJ DNA in complex with RuvA. In the full resolvosome a probable DNA-RuvA(4)-RuvB(12)-RuvC(2) complex forms which resolves the HJ. Mg(2+) serves as cofactor.

It is found in the cytoplasm. It catalyses the reaction Endonucleolytic cleavage at a junction such as a reciprocal single-stranded crossover between two homologous DNA duplexes (Holliday junction).. In terms of biological role, the RuvA-RuvB-RuvC complex processes Holliday junction (HJ) DNA during genetic recombination and DNA repair. Endonuclease that resolves HJ intermediates. Cleaves cruciform DNA by making single-stranded nicks across the HJ at symmetrical positions within the homologous arms, yielding a 5'-phosphate and a 3'-hydroxyl group; requires a central core of homology in the junction. The consensus cleavage sequence is 5'-(A/T)TT(C/G)-3'. Cleavage occurs on the 3'-side of the TT dinucleotide at the point of strand exchange. HJ branch migration catalyzed by RuvA-RuvB allows RuvC to scan DNA until it finds its consensus sequence, where it cleaves and resolves the cruciform DNA. The protein is Crossover junction endodeoxyribonuclease RuvC of Pseudoalteromonas translucida (strain TAC 125).